Consider the following 254-residue polypeptide: AA9 family lytic polysaccharide monooxygenase A (254 aa).

Positions 1–19 (MKYSILGLTALSFVASAAA) are cleaved as a signal peptide. Histidine 20 lines the Cu(2+) pocket. Position 20 is a methylhistidine (histidine 20). (1,4-beta-D-glucosyl)n is bound at residue valine 28. Asparagine 52 carries N-linked (GlcNAc...) asparagine glycosylation. Residues cysteine 60 and cysteine 186 are joined by a disulfide bond. The (1,4-beta-D-glucosyl)n site is built by valine 66, valine 67, aspartate 77, and asparagine 86. Histidine 97 contacts Cu(2+). Asparagine 129 carries N-linked (GlcNAc...) asparagine glycosylation. Valine 148 and arginine 159 together coordinate (1,4-beta-D-glucosyl)n. Residues histidine 166 and glutamine 181 each coordinate O2. Tyrosine 183 provides a ligand contact to Cu(2+).

It belongs to the polysaccharide monooxygenase AA9 family. Cu(2+) is required as a cofactor. The catalytically essential N-terminal histidine His-20 is post-translationally modified by methylation to prevent protonation of the histidine side chain, and protect the critical active site of the enzyme from oxidative damage.

It localises to the secreted. The catalysed reaction is [(1-&gt;4)-beta-D-glucosyl]n+m + reduced acceptor + O2 = 4-dehydro-beta-D-glucosyl-[(1-&gt;4)-beta-D-glucosyl]n-1 + [(1-&gt;4)-beta-D-glucosyl]m + acceptor + H2O.. Its activity is regulated as follows. The polyphenol cinnamtannin B1 contained in methanolic extract of Cinnamomum cassia (cinnamon) acts as an inhibitor of catalytic activity. Lytic polysaccharide monooxygenase (LPMO) that depolymerizes crystalline and amorphous polysaccharides via the oxidation of scissile alpha- or beta-(1-4)-glycosidic bonds, yielding C1 or C4 oxidation product. Catalysis by LPMOs requires the reduction of the active-site copper from Cu(II) to Cu(I) by a reducing agent and H(2)O(2) or O(2) as a cosubstrate. Is able to cleave phosphoric acid swollen cellulose (PASC) in the presence of a reducing agent, yielding a range of cellooligosaccharides dominated by cellobiose and cellotriose. Activity is less sensitive to the reducing agent potential when cleaving xylan, suggesting that distinct catalytic mechanisms exist for xylan and glucan cleavage. The sequence is that of AA9 family lytic polysaccharide monooxygenase A from Panus similis (Lentinoid fungus).